The sequence spans 648 residues: DNA ligase (648 aa).

Residues 30–34 (DEEYD), 79–80 (SM), and glutamate 108 contribute to the NAD(+) site. The active-site N6-AMP-lysine intermediate is lysine 110. NAD(+) contacts are provided by arginine 131, glutamate 165, lysine 280, and lysine 304. Residues cysteine 398, cysteine 401, cysteine 414, and cysteine 419 each coordinate Zn(2+). The 76-residue stretch at 573 to 648 (AKENPFKGKI…LTEDEMRAML (76 aa)) folds into the BRCT domain.

The protein belongs to the NAD-dependent DNA ligase family. LigA subfamily. It depends on Mg(2+) as a cofactor. Requires Mn(2+) as cofactor.

The catalysed reaction is NAD(+) + (deoxyribonucleotide)n-3'-hydroxyl + 5'-phospho-(deoxyribonucleotide)m = (deoxyribonucleotide)n+m + AMP + beta-nicotinamide D-nucleotide.. DNA ligase that catalyzes the formation of phosphodiester linkages between 5'-phosphoryl and 3'-hydroxyl groups in double-stranded DNA using NAD as a coenzyme and as the energy source for the reaction. It is essential for DNA replication and repair of damaged DNA. The polypeptide is DNA ligase (Sulfurovum sp. (strain NBC37-1)).